The chain runs to 455 residues: MKQTLFDKIWNTHVVAGEPGEAQLIYVDLHLIHEVTSPQPFDGLRSTKRQLRRPDLTFATMDHNVPTKDIFNIEDQMSRLQMDTLVKNAQEFGVPLASIGDDKQGIVHVVGPERGLTQPGKVIVCGDSHTATHGAFGAIAFGIGTSEVEHVMATQTIWQVKPKTMGIKVTGEMPKNTYAKDIIMAIIAEHGVSFGTGYAIEFYGETIEALSMAARMTLCNMSIEAGSKTGMVKPDQTTFDYIAGREFAPKKFDSAKAYWSQFYTDDETAFDEIITFDVSHLKPMVTWGTNPGMATAVDQILPEIRDDNDRAAYDYIGLEPGIPVTDIPLDYIFIGSCTNSRYEDLAIAAAMMKGQHLAPNITAWIVPGSRAIRNRAIATSIAKIFEAAGCEWREPGCSACLAMNPDKIPAGKHVASTSNRNFIGRQGAGSRTHLASPAMVAAAGIAGHFVDITEI.

[4Fe-4S] cluster-binding residues include cysteine 337, cysteine 397, and cysteine 400.

It belongs to the aconitase/IPM isomerase family. LeuC type 1 subfamily. Heterodimer of LeuC and LeuD. It depends on [4Fe-4S] cluster as a cofactor.

It carries out the reaction (2R,3S)-3-isopropylmalate = (2S)-2-isopropylmalate. Its pathway is amino-acid biosynthesis; L-leucine biosynthesis; L-leucine from 3-methyl-2-oxobutanoate: step 2/4. Functionally, catalyzes the isomerization between 2-isopropylmalate and 3-isopropylmalate, via the formation of 2-isopropylmaleate. This is 3-isopropylmalate dehydratase large subunit from Leuconostoc citreum (strain KM20).